The chain runs to 318 residues: Ribosomal RNA small subunit methyltransferase H (318 aa).

Residues 38–40 (AGH), D57, L91, D105, and Q112 each bind S-adenosyl-L-methionine.

Belongs to the methyltransferase superfamily. RsmH family.

It is found in the cytoplasm. The enzyme catalyses cytidine(1402) in 16S rRNA + S-adenosyl-L-methionine = N(4)-methylcytidine(1402) in 16S rRNA + S-adenosyl-L-homocysteine + H(+). Specifically methylates the N4 position of cytidine in position 1402 (C1402) of 16S rRNA. This chain is Ribosomal RNA small subunit methyltransferase H, found in Clavibacter sepedonicus (Clavibacter michiganensis subsp. sepedonicus).